Consider the following 462-residue polypeptide: Microspherule protein 1 (462 aa).

Position 1 is an N-acetylmethionine (Met-1). Residues 1 to 130 (MDKDSQGLLD…KSKQPLQVTK (130 aa)) form a disordered region. Ser-22 is modified (phosphoserine). The segment covering 43–55 (PKRRSSSRFIKRK) has biased composition (basic residues). A Phosphoserine modification is found at Ser-102. Thr-103 is modified (phosphothreonine). The segment covering 103 to 112 (TPVPPSPAPA) has biased composition (pro residues). Ser-108 carries the phosphoserine modification. A Nuclear localization signal motif is present at residues 113–123 (PGLTKRVKKSK). N6-acetyllysine occurs at positions 123 and 130. The residue at position 282 (Ser-282) is a Phosphoserine. The stretch at 301–335 (LEHELMVADRRQKREIRQLEQELHKWQVLVDSITG) forms a coiled coil. The region spanning 363-419 (ITLGRATKDNQIDVDLSLEGPAWKISRKQGVIKLKNNGDFFIANEGRRPIYIDGRPV) is the FHA domain. Positions 389–396 (RKQGVIKL) match the UBR5-degron motif.

As to quaternary structure, component of the chromatin remodeling INO80 complex; specifically part of a complex module associated with the N-terminus of INO80. Component of some MLL1/MLL complex, at least composed of the core components KMT2A/MLL1, ASH2L, HCFC1, WDR5 and RBBP5, as well as the facultative components BACC1, CHD8, E2F6, HSP70, INO80C, KANSL1, LAS1L, MAX, MCRS1, MGA, KAT8/MOF, PELP1, PHF20, PRP31, RING2, RUVB1/TIP49A, RUVB2/TIP49B, SENP3, TAF1, TAF4, TAF6, TAF7, TAF9 and TEX10. Component of the NSL complex at least composed of MOF/KAT8, KANSL1, KANSL2, KANSL3, MCRS1, PHF20, OGT1/OGT, WDR5 and HCFC1. Interacts with NOP2. Interacts with PINX1. Interacts with TERT. Interacts with CCDC85B. Interacts with DAXX. Interacts (via N-terminus) with FMR1 (via phosphorylated form). Interacts with FXR1 and FXR2. Interacts (via C-terminus) with NDE1 (via C-terminus); phosphorylation of NDE1 inhibits the interaction. Interacts (via C-terminus) with ZNF375. Interacts (via C-terminus) with active GTP-bound RHEB (via N-terminus) under conditions of high amino acid concentration; the interaction promotes mTORC1 complex activation by RHEB. Interacts (via N-terminus) with the mTORC1 complex; the interaction ensures mTORC1 activation by RHEB. Interacts with DYNC1I1; the interaction is required for the proper distribution of centriolar satellites. Interacts with TTBK2; the interaction is required for recruitment of TTBK2 to the mother centriole. Interacts with KIF2A; the interaction occurs during mitosis and facilitates chromosome alignment. In terms of assembly, (Microbial infection) Interacts with Herpes simplex virus ICP22. Ubiquitinated by UBR5 when not assembled in the INO80 complex, leading to its degradation: UBR5 recognizes and binds a degron that is not accessible when MCRS1 is part of the INO80 complex. In terms of processing, phosphorylated by AURKA on Ser-35 and/or Ser-36 during mitosis which is required for kinetochore fiber assembly and mitotic progression but not for spindle localization or for chromosome-induced microtuble aster formation. Also phosphorylated by AURKA on Ser-85 and/or Ser-87. Phosphorylated by TTK/MPS1 which enhances recruitment of KIF2A to the minus end of spindle microtubules and facilitates precise chromosome segregation. In terms of tissue distribution, detected in testis, and at lower levels in spleen, thymus, prostate, uterus, small intestine, colon and leukocytes.

It localises to the nucleus. Its subcellular location is the nucleolus. The protein resides in the cytoplasm. It is found in the cytoskeleton. The protein localises to the microtubule organizing center. It localises to the centrosome. Its subcellular location is the spindle pole. The protein resides in the chromosome. It is found in the centromere. The protein localises to the kinetochore. It localises to the lysosome. Its subcellular location is the centriolar satellite. Functionally, modulates the transcription repressor activity of DAXX by recruiting it to the nucleolus. As part of the NSL complex, may be involved in acetylation of nucleosomal histone H4 on several lysine residues. Putative regulatory component of the chromatin remodeling INO80 complex which is involved in transcriptional regulation, DNA replication and probably DNA repair. May also be an inhibitor of TERT telomerase activity. Binds to G-quadruplex structures in mRNA. Binds to RNA homomer poly(G) and poly(U). Maintains RHEB at the lysosome in its active GTP-bound form and prevents its interaction with the mTORC1 complex inhibitor TSC2, ensuring activation of the mTORC1 complex by RHEB. Stabilizes the minus ends of kinetochore fibers by protecting them from depolymerization, ensuring functional spindle assembly during mitosis. Following phosphorylation by TTK/MPS1, enhances recruitment of KIF2A to the minus ends of mitotic spindle microtubules which promotes chromosome alignment. Regulates the morphology of microtubule minus ends in mitotic spindle by maintaining them in a closed conformation characterized by the presence of an electron-dense cap. Regulates G2/M transition and spindle assembly during oocyte meiosis. Mediates histone modifications and transcriptional regulation in germinal vesicle oocytes which are required for meiotic progression. Also regulates microtubule nucleation and spindle assembly by activating aurora kinases during oocyte meiosis. Contributes to the establishment of centriolar satellites and also plays a role in primary cilium formation by recruiting TTBK2 to the mother centriole which is necessary for removal of the CP110 cap from the mother centriole, an early step in ciliogenesis. Required for epiblast development during early embryogenesis. Essential for cell viability. The polypeptide is Microspherule protein 1 (MCRS1) (Homo sapiens (Human)).